A 347-amino-acid chain; its full sequence is Acetylglutamate kinase, chloroplastic (347 aa).

The N-terminal 50 residues, 1–50 (MATVTSNASPKSFSFTVSNPFKTLIPNKSPSLCYPTRNKNHHRLGFSIKA), are a transit peptide targeting the chloroplast. Residue threonine 51 is modified to N-acetylthreonine. 94-95 (GA) is a binding site for ATP. N-acetyl-L-glutamate contacts are provided by residues glycine 126, arginine 148, and 242–245 (NINA). Lysine 260 is an L-arginine binding site. ATP contacts are provided by residues 265-266 (TD) and leucine 271. Lysine 282 serves as a coordination point for L-arginine. 297–305 (KVAGGMIPK) serves as a coordination point for ATP. L-arginine-binding positions include 334 to 337 (EIMS) and glycine 342.

The protein belongs to the acetylglutamate kinase family. ArgB subfamily. Interacts with GLB1. Interaction is dependent of MgATP and inhibited by 2-oxoglutarate, arginine, glutamate, citrate, and oxaloacetate.

The protein localises to the plastid. The protein resides in the chloroplast stroma. It catalyses the reaction N-acetyl-L-glutamate + ATP = N-acetyl-L-glutamyl 5-phosphate + ADP. The protein operates within amino-acid biosynthesis; L-arginine biosynthesis; N(2)-acetyl-L-ornithine from L-glutamate: step 2/4. Its activity is regulated as follows. Inhibited by arginine. Inhibition is relieved by binding to GLB1. In terms of biological role, involved in the arginine biosynthetic pathway via the intermediate compound ornithine. The sequence is that of Acetylglutamate kinase, chloroplastic from Arabidopsis thaliana (Mouse-ear cress).